A 405-amino-acid polypeptide reads, in one-letter code: Tryptophan synthase beta chain (405 aa).

N6-(pyridoxal phosphate)lysine is present on lysine 86.

It belongs to the TrpB family. Tetramer of two alpha and two beta chains. The cofactor is pyridoxal 5'-phosphate.

The enzyme catalyses (1S,2R)-1-C-(indol-3-yl)glycerol 3-phosphate + L-serine = D-glyceraldehyde 3-phosphate + L-tryptophan + H2O. The protein operates within amino-acid biosynthesis; L-tryptophan biosynthesis; L-tryptophan from chorismate: step 5/5. Functionally, the beta subunit is responsible for the synthesis of L-tryptophan from indole and L-serine. The chain is Tryptophan synthase beta chain from Shewanella piezotolerans (strain WP3 / JCM 13877).